A 638-amino-acid polypeptide reads, in one-letter code: Epithelial sodium channel subunit beta (638 aa).

Residues 1-50 lie on the Cytoplasmic side of the membrane; it reads MPVKKYLLKCLHRLQKGPGYTYKELLVWYCNNTNTHGPKRIICEGPKKKA. The helical transmembrane segment at 51 to 71 threads the bilayer; the sequence is MWFLLTLLFACLVCWQWGVFI. Residues 72-530 lie on the Extracellular side of the membrane; sequence QTYLSWEVSV…GGQFGFWMGG (459 aa). Disulfide bonds link Cys-98–Cys-270, Cys-182–Cys-187, Cys-194–Cys-201, Cys-247–Cys-254, Cys-359–Cys-446, Cys-384–Cys-442, Cys-388–Cys-438, Cys-397–Cys-424, and Cys-399–Cys-413. N-linked (GlcNAc...) asparagine glycosylation is found at Asn-135 and Asn-141. Asn-205 carries N-linked (GlcNAc...) asparagine glycosylation. The chain crosses the membrane as a helical span at residues 531–551; it reads SVLCLIEFGEIIIDFIWITII. At 552-638 the chain is on the cytoplasmic side; the sequence is KLVASCKGLR…MESDSEVEAI (87 aa). Residues 594–620 form a disordered region; it reads SCRPHGEVYPDQQTLPIPGTPPPNYDS. A PY motif; recruits WW domain-containing proteins and is thereby required for ubiquitination and inhibition of the channel by NEDD4 and NEDD4L motif is present at residues 614-618; the sequence is PPPNY. Ser-631 and Ser-633 each carry phosphoserine.

It belongs to the amiloride-sensitive sodium channel (TC 1.A.6) family. SCNN1B subfamily. As to quaternary structure, component of the heterotrimeric epithelial sodium channel (ENaC) composed of an alpha/SCNN1A, a beta/SCNN1B and a gamma/SCNN1G subunit. Interacts with WWP1 (via WW domains). Interacts with WWP2 (via WW domains); inhibits the channel. Interacts with the full-length immature form of PCSK9 (pro-PCSK9). Interacts (N-glycosylated) with BPIFA1; the interaction is direct and inhibits the proteolytic processing of SCNN1A and SCNN1G and the activation of ENaC. Ubiquitinated. Can be ubiquitinated at multiple sites and undergo monoubiquitination and polyubiquitination. Ubiquitination by NEDD4 or NEDD4L inhibits the ENaC channel through endocytosis, intracellular retention and degradation of its individual subunits. However, some studies could not confirm the ubiquitination of this subunit of the ENaC. In terms of processing, N-glycosylated. N-glycosylation is required for interaction with BPIFA1. Post-translationally, phosphorylated on serine and threonine residues. Aldosterone and insulin increase the basal level of phosphorylation. In terms of tissue distribution, lung and kidney.

It is found in the apical cell membrane. The protein localises to the cytoplasmic vesicle membrane. It catalyses the reaction Na(+)(in) = Na(+)(out). With respect to regulation, originally identified and characterized by its inhibition by the diuretic drug amiloride. Functionally, this is one of the three pore-forming subunits of the heterotrimeric epithelial sodium channel (ENaC), a critical regulator of sodium balance and fluid homeostasis. ENaC operates in epithelial tissues, where it mediates the electrodiffusion of sodium ions from extracellular fluid through the apical membrane of cells, with water following osmotically. It plays a key role in maintaining sodium homeostasis through electrogenic sodium reabsorption in the kidneys. This subunit is not essential for ENaC function in airway surface liquid homeostasis and proper mucus clearance. The chain is Epithelial sodium channel subunit beta from Mus musculus (Mouse).